The sequence spans 717 residues: Polyribonucleotide nucleotidyltransferase (717 aa).

2 residues coordinate Mg(2+): Asp-486 and Asp-492. Residues 553–612 (PKIIQLQIDIDKISLVIGSTGKTVKAITDEFEVRVQIEQDGRITLFGTDSLKMQKAKARI) form the KH domain. Positions 622 to 715 (GEIYEGVVKK…KFGKIELELV (94 aa)) constitute an S1 motif domain. A disordered region spans residues 650-683 (SNRPKSRDDRYGDMRHSRYGSGRHSRYGRDSRNT). Basic and acidic residues predominate over residues 654-665 (KSRDDRYGDMRH). A compositionally biased stretch (basic residues) spans 666-675 (SRYGSGRHSR).

Belongs to the polyribonucleotide nucleotidyltransferase family. The cofactor is Mg(2+).

The protein resides in the cytoplasm. It carries out the reaction RNA(n+1) + phosphate = RNA(n) + a ribonucleoside 5'-diphosphate. Functionally, involved in mRNA degradation. Catalyzes the phosphorolysis of single-stranded polyribonucleotides processively in the 3'- to 5'-direction. This chain is Polyribonucleotide nucleotidyltransferase, found in Borrelia turicatae (strain 91E135).